Reading from the N-terminus, the 201-residue chain is 3-isopropylmalate dehydratase small subunit (201 aa).

The protein belongs to the LeuD family. LeuD type 1 subfamily. Heterodimer of LeuC and LeuD.

It catalyses the reaction (2R,3S)-3-isopropylmalate = (2S)-2-isopropylmalate. Its pathway is amino-acid biosynthesis; L-leucine biosynthesis; L-leucine from 3-methyl-2-oxobutanoate: step 2/4. In terms of biological role, catalyzes the isomerization between 2-isopropylmalate and 3-isopropylmalate, via the formation of 2-isopropylmaleate. The polypeptide is 3-isopropylmalate dehydratase small subunit (Enterobacter sp. (strain 638)).